The chain runs to 432 residues: Serine--tRNA ligase (432 aa).

An L-serine-binding site is contributed by 235–237 (TSE). 266-268 (RSE) contributes to the ATP binding site. An L-serine-binding site is contributed by E289. 353 to 356 (EISS) contributes to the ATP binding site. S388 is a binding site for L-serine.

Belongs to the class-II aminoacyl-tRNA synthetase family. Type-1 seryl-tRNA synthetase subfamily. Homodimer. The tRNA molecule binds across the dimer.

It is found in the cytoplasm. It carries out the reaction tRNA(Ser) + L-serine + ATP = L-seryl-tRNA(Ser) + AMP + diphosphate + H(+). The catalysed reaction is tRNA(Sec) + L-serine + ATP = L-seryl-tRNA(Sec) + AMP + diphosphate + H(+). The protein operates within aminoacyl-tRNA biosynthesis; selenocysteinyl-tRNA(Sec) biosynthesis; L-seryl-tRNA(Sec) from L-serine and tRNA(Sec): step 1/1. Functionally, catalyzes the attachment of serine to tRNA(Ser). Is also able to aminoacylate tRNA(Sec) with serine, to form the misacylated tRNA L-seryl-tRNA(Sec), which will be further converted into selenocysteinyl-tRNA(Sec). In Paraburkholderia phymatum (strain DSM 17167 / CIP 108236 / LMG 21445 / STM815) (Burkholderia phymatum), this protein is Serine--tRNA ligase.